We begin with the raw amino-acid sequence, 131 residues long: Small ribosomal subunit protein uS8 (131 aa).

Belongs to the universal ribosomal protein uS8 family. In terms of assembly, part of the 30S ribosomal subunit. Contacts proteins S5 and S12.

Its function is as follows. One of the primary rRNA binding proteins, it binds directly to 16S rRNA central domain where it helps coordinate assembly of the platform of the 30S subunit. The chain is Small ribosomal subunit protein uS8 from Burkholderia mallei (strain NCTC 10247).